The following is a 410-amino-acid chain: Succinyl-CoA:(R)-benzylsuccinate CoA-transferase subunit BbsE (410 aa).

Belongs to the CoA-transferase III family. As to quaternary structure, heterotetramer composed of 2 BbsE subunits and 2 BbsF subunits.

It carries out the reaction (R)-2-benzylsuccinate + succinyl-CoA = (R)-2-benzylsuccinyl-CoA + succinate. It functions in the pathway xenobiotic degradation; toluene degradation. Its activity is regulated as follows. Inhibited by (S)-benzylsuccinyl-CoA. In terms of biological role, catalyzes the reversible conversion of (R)-2-benzylsuccinate to (R)-2-benzylsuccinyl-CoA. Inactive with (S)-benzylsuccinate. The polypeptide is Succinyl-CoA:(R)-benzylsuccinate CoA-transferase subunit BbsE (bbsE) (Thauera aromatica).